A 194-amino-acid polypeptide reads, in one-letter code: Large ribosomal subunit protein bL9c (194 aa).

The transit peptide at 1 to 39 (MASSTLSSLSSTPLQHSFAANLKTCSQFPNKSSGFMVFA) directs the protein to the chloroplast.

Belongs to the bacterial ribosomal protein bL9 family. Part of the 50S ribosomal subunit.

It localises to the plastid. The protein resides in the chloroplast. Binds to the 23S rRNA. The protein is Large ribosomal subunit protein bL9c (RPL9) of Pisum sativum (Garden pea).